The following is a 545-amino-acid chain: CTP synthase (545 aa).

The interval 1-267 (MTKFIFVTGG…AEQTLKLLQM (267 aa)) is amidoligase domain. CTP is bound at residue Ser13. UTP is bound at residue Ser13. Residues 14–19 (SIGKGI) and Asp71 contribute to the ATP site. 2 residues coordinate Mg(2+): Asp71 and Glu141. CTP-binding positions include 148–150 (DIE), 188–193 (KTKPTQ), and Lys224. Residues 188-193 (KTKPTQ) and Lys224 each bind UTP. One can recognise a Glutamine amidotransferase type-1 domain in the interval 292-534 (EIAIVGKYVS…VQAAIAQSHP (243 aa)). Position 354 (Gly354) interacts with L-glutamine. The active-site Nucleophile; for glutamine hydrolysis is Cys381. L-glutamine-binding positions include 382-385 (LGMQ), Glu405, and Arg462. Active-site residues include His507 and Glu509.

The protein belongs to the CTP synthase family. In terms of assembly, homotetramer.

It catalyses the reaction UTP + L-glutamine + ATP + H2O = CTP + L-glutamate + ADP + phosphate + 2 H(+). It carries out the reaction L-glutamine + H2O = L-glutamate + NH4(+). The enzyme catalyses UTP + NH4(+) + ATP = CTP + ADP + phosphate + 2 H(+). The protein operates within pyrimidine metabolism; CTP biosynthesis via de novo pathway; CTP from UDP: step 2/2. Its activity is regulated as follows. Allosterically activated by GTP, when glutamine is the substrate; GTP has no effect on the reaction when ammonia is the substrate. The allosteric effector GTP functions by stabilizing the protein conformation that binds the tetrahedral intermediate(s) formed during glutamine hydrolysis. Inhibited by the product CTP, via allosteric rather than competitive inhibition. In terms of biological role, catalyzes the ATP-dependent amination of UTP to CTP with either L-glutamine or ammonia as the source of nitrogen. Regulates intracellular CTP levels through interactions with the four ribonucleotide triphosphates. This Trichormus variabilis (strain ATCC 29413 / PCC 7937) (Anabaena variabilis) protein is CTP synthase.